We begin with the raw amino-acid sequence, 69 residues long: Conotoxin AbVIF (69 aa).

The N-terminal stretch at 1–17 (VLIIAVLFLTACQLTTA) is a signal peptide. The propeptide occupies 18-40 (ETSSRGKQKHRALRSTDKNSRMS). A disordered region spans residues 20 to 41 (SSRGKQKHRALRSTDKNSRMSK). 3 disulfide bridges follow: C43-C57, C50-C61, and C56-C68.

It belongs to the conotoxin O1 superfamily. Expressed by the venom duct.

It localises to the secreted. This is Conotoxin AbVIF from Conus abbreviatus (Abbreviated cone).